The sequence spans 160 residues: Protein-export protein SecB (160 aa).

It belongs to the SecB family. In terms of assembly, homotetramer, a dimer of dimers. One homotetramer interacts with 1 SecA dimer.

It is found in the cytoplasm. One of the proteins required for the normal export of preproteins out of the cell cytoplasm. It is a molecular chaperone that binds to a subset of precursor proteins, maintaining them in a translocation-competent state. It also specifically binds to its receptor SecA. This chain is Protein-export protein SecB, found in Orientia tsutsugamushi (strain Boryong) (Rickettsia tsutsugamushi).